The primary structure comprises 376 residues: Thymidine kinase (376 aa).

The interval 1–39 (MASYPCHQHASAFDQAARSRGHSNRRTALRPRRQQEATE) is disordered. The span at 19 to 32 (SRGHSNRRTALRPR) shows a compositional bias: basic residues. 56–63 (GPHGMGKT) contributes to the ATP binding site. Glu83 serves as the catalytic Proton acceptor. Residues Tyr101 and Gln125 each coordinate substrate. Arg216 is a binding site for ATP. Arg222 is a binding site for substrate. A disordered region spans residues 260–280 (GQLSGTAVPPQGAEPQSNAGP).

It belongs to the herpesviridae thymidine kinase family. Homodimer.

It carries out the reaction thymidine + ATP = dTMP + ADP + H(+). In terms of biological role, catalyzes the transfer of the gamma-phospho group of ATP to thymidine to generate dTMP in the salvage pathway of pyrimidine synthesis. The dTMP serves as a substrate for DNA polymerase during viral DNA replication. Allows the virus to be reactivated and to grow in non-proliferative cells lacking a high concentration of phosphorylated nucleic acid precursors. The sequence is that of Thymidine kinase from Human herpesvirus 1 (strain KOS) (HHV-1).